The following is a 209-amino-acid chain: Histidine biosynthesis bifunctional protein HisIE (209 aa).

Positions 1 to 123 are phosphoribosyl-AMP cyclohydrolase; the sequence is MEIEKLLEQV…VLPIDYSLSI (123 aa). A phosphoribosyl-ATP pyrophosphohydrolase region spans residues 124–209; it reads LKELEEIIKR…VMNELRRRRK (86 aa).

It in the N-terminal section; belongs to the PRA-CH family. This sequence in the C-terminal section; belongs to the PRA-PH family.

It localises to the cytoplasm. The catalysed reaction is 1-(5-phospho-beta-D-ribosyl)-ATP + H2O = 1-(5-phospho-beta-D-ribosyl)-5'-AMP + diphosphate + H(+). The enzyme catalyses 1-(5-phospho-beta-D-ribosyl)-5'-AMP + H2O = 1-(5-phospho-beta-D-ribosyl)-5-[(5-phospho-beta-D-ribosylamino)methylideneamino]imidazole-4-carboxamide. The protein operates within amino-acid biosynthesis; L-histidine biosynthesis; L-histidine from 5-phospho-alpha-D-ribose 1-diphosphate: step 2/9. Its pathway is amino-acid biosynthesis; L-histidine biosynthesis; L-histidine from 5-phospho-alpha-D-ribose 1-diphosphate: step 3/9. The chain is Histidine biosynthesis bifunctional protein HisIE (hisI) from Pyrococcus furiosus (strain ATCC 43587 / DSM 3638 / JCM 8422 / Vc1).